Here is a 185-residue protein sequence, read N- to C-terminus: MELDLALDAAGPWSPEDPSSLIETQTWQITLVDWIQTICADPSLPCPALVCQADEVSLGLRFTDDATITALNSTWRQRNQATDVLSFAALEEAPGLPDVSCVELGDIVISLDTARRQASEHGHNLTRELRWLVSHGLLHLLGWDHPDEESLVAMLQLQEQLLDGGSNVRIRDPHSVDTTVDVNAH.

3 residues coordinate Zn(2+): H135, H139, and H145.

It belongs to the endoribonuclease YbeY family. It depends on Zn(2+) as a cofactor.

It localises to the cytoplasm. Its function is as follows. Single strand-specific metallo-endoribonuclease involved in late-stage 70S ribosome quality control and in maturation of the 3' terminus of the 16S rRNA. This Parasynechococcus marenigrum (strain WH8102) protein is Endoribonuclease YbeY.